A 230-amino-acid polypeptide reads, in one-letter code: Orotidine 5'-phosphate decarboxylase (230 aa).

Residues D11, K34, 61–70 (DLKLHDIPNT), T117, R179, Q188, G208, and R209 contribute to the substrate site. Residue K63 is the Proton donor of the active site.

This sequence belongs to the OMP decarboxylase family. Type 1 subfamily. In terms of assembly, homodimer.

The enzyme catalyses orotidine 5'-phosphate + H(+) = UMP + CO2. It participates in pyrimidine metabolism; UMP biosynthesis via de novo pathway; UMP from orotate: step 2/2. In terms of biological role, catalyzes the decarboxylation of orotidine 5'-monophosphate (OMP) to uridine 5'-monophosphate (UMP). This Streptococcus equi subsp. zooepidemicus (strain MGCS10565) protein is Orotidine 5'-phosphate decarboxylase.